The following is a 613-amino-acid chain: 8-methylmenaquinol:fumarate reductase flavoprotein subunit (613 aa).

Residues 1–33 (MSEQFTRREFLQSACITMGALAVSTSGVDRAFA) constitute a signal peptide (tat-type signal). FAD contacts are provided by residues 53-58 (GSGAAG), 78-93 (SKVM…AEGG), and Asp-255. Substrate contacts are provided by His-276 and Thr-288. Arg-319 serves as the catalytic Proton acceptor. His-387 is a binding site for substrate. Position 413 (Glu-413) interacts with FAD. Arg-424 lines the substrate pocket. Position 429-430 (429-430 (SL)) interacts with FAD.

This sequence belongs to the FAD-dependent oxidoreductase 2 family. FRD/SDH subfamily. In terms of assembly, the MFR complex is composed of three subunits: a flavoprotein (SdhA), an iron-sulfur protein (SdhB), and one hydrophobic anchor protein (SdhE). FAD serves as cofactor. In terms of processing, predicted to be exported by the Tat system. The position of the signal peptide cleavage has not been experimentally proven.

Its subcellular location is the periplasm. It is found in the cell membrane. It catalyses the reaction 8-methylmenaquinone-6 + succinate = 8-methylmenaquinol-6 + fumarate. Its function is as follows. Flavoprotein subunit of 8-methylmenaquinol:fumarate reductase (MFR), that catalyzes the reduction of fumarate using 8-methylmenaquinol-6 as electron donor. The complex shows no succinate oxidation activity. Is involved in anaerobic metabolism. SdhA contains the dicarboxylate reduction site. This Wolinella succinogenes (strain ATCC 29543 / DSM 1740 / CCUG 13145 / JCM 31913 / LMG 7466 / NCTC 11488 / FDC 602W) (Vibrio succinogenes) protein is 8-methylmenaquinol:fumarate reductase flavoprotein subunit.